The primary structure comprises 571 residues: Putative diflavin flavoprotein A 1 (571 aa).

The interval 43–236 (ENGTTYNSFL…PPVQLVATGH (194 aa)) is zinc metallo-hydrolase. Fe cation is bound by residues His-92, Glu-94, Asp-96, His-159, Asp-178, and His-236. Positions 265 to 426 (VAIFYAANYG…DLDKALGRLS (162 aa)) constitute a Flavodoxin-like domain. Residues 427–571 (GGLYIITAQK…VHHRKVGNHY (145 aa)) form a flavodoxin-reductase-like region.

The protein in the N-terminal section; belongs to the zinc metallo-hydrolase group 3 family. This sequence in the C-terminal section; belongs to the flavodoxin reductase family. The cofactor is Fe cation.

In terms of biological role, mediates electron transfer from NADH to oxygen, reducing it to water. This modular protein has 3 redox cofactors, in other organisms the same activity requires 2 or 3 proteins. This chain is Putative diflavin flavoprotein A 1 (dfa1), found in Thermosynechococcus vestitus (strain NIES-2133 / IAM M-273 / BP-1).